We begin with the raw amino-acid sequence, 369 residues long: Phenylalanine--tRNA ligase alpha subunit (369 aa).

E269 contacts Mg(2+).

The protein belongs to the class-II aminoacyl-tRNA synthetase family. Phe-tRNA synthetase alpha subunit type 1 subfamily. As to quaternary structure, tetramer of two alpha and two beta subunits. It depends on Mg(2+) as a cofactor.

It localises to the cytoplasm. It carries out the reaction tRNA(Phe) + L-phenylalanine + ATP = L-phenylalanyl-tRNA(Phe) + AMP + diphosphate + H(+). This Brucella abortus (strain 2308) protein is Phenylalanine--tRNA ligase alpha subunit.